The chain runs to 255 residues: L-seryl-tRNA(Sec) kinase (255 aa).

Residue G7–S14 coordinates ATP.

Belongs to the L-seryl-tRNA(Sec) kinase family.

It catalyses the reaction L-seryl-tRNA(Sec) + ATP = O-phospho-L-seryl-tRNA(Sec) + ADP. Its pathway is aminoacyl-tRNA biosynthesis; selenocysteinyl-tRNA(Sec) biosynthesis; selenocysteinyl-tRNA(Sec) from L-seryl-tRNA(Sec) (archaeal/eukaryal route): step 1/2. In terms of biological role, specifically phosphorylates seryl-tRNA(Sec) to O-phosphoseryl-tRNA(Sec), an activated intermediate for selenocysteine biosynthesis. This Methanococcus maripaludis (strain DSM 14266 / JCM 13030 / NBRC 101832 / S2 / LL) protein is L-seryl-tRNA(Sec) kinase (pstK).